Here is an 833-residue protein sequence, read N- to C-terminus: Ventricular zone-expressed PH domain-containing protein homolog 1 (833 aa).

The segment at 201–319 (TELLALMSQL…TYLVSQLANM (119 aa)) is interaction with TGFBR1. The segment at 458–505 (KGVGSDDGEDENRGDIPASISLSEIDPLGQGNDKLPFKTDTERSQLGE) is disordered. The span at 492-502 (LPFKTDTERSQ) shows a compositional bias: basic and acidic residues. Positions 663 to 833 (ESTFPQQKDL…RESREVTTYL (171 aa)) are interaction with TGFBR1. The PH domain maps to 716-819 (QPLIEGKLKE…WLQCINVAVA (104 aa)).

It belongs to the MELT/VEPH family. In terms of assembly, interacts with TGFBR1.

The protein localises to the cell membrane. Functionally, interacts with TGF-beta receptor type-1 (TGFBR1) and inhibits dissociation of activated SMAD2 from TGFBR1, impeding its nuclear accumulation and resulting in impaired TGF-beta signaling. May also affect FOXO, Hippo and Wnt signaling. The sequence is that of Ventricular zone-expressed PH domain-containing protein homolog 1 (VEPH1) from Homo sapiens (Human).